A 198-amino-acid chain; its full sequence is Na(+)-translocating NADH-quinone reductase subunit E (198 aa).

6 helical membrane passes run 11 to 31, 35 to 55, 77 to 97, 109 to 129, 140 to 160, and 176 to 196; these read AVFV…FLAV, VSTA…SVPA, FLNF…LEMI, LGIF…VSFM, IVYG…LAGI, and LGIT…FSGV.

Belongs to the NqrDE/RnfAE family. As to quaternary structure, composed of six subunits; NqrA, NqrB, NqrC, NqrD, NqrE and NqrF.

Its subcellular location is the cell inner membrane. The enzyme catalyses a ubiquinone + n Na(+)(in) + NADH + H(+) = a ubiquinol + n Na(+)(out) + NAD(+). Its function is as follows. NQR complex catalyzes the reduction of ubiquinone-1 to ubiquinol by two successive reactions, coupled with the transport of Na(+) ions from the cytoplasm to the periplasm. NqrA to NqrE are probably involved in the second step, the conversion of ubisemiquinone to ubiquinol. In Yersinia enterocolitica serotype O:8 / biotype 1B (strain NCTC 13174 / 8081), this protein is Na(+)-translocating NADH-quinone reductase subunit E.